The primary structure comprises 257 residues: tRNA uridine(34) hydroxylase (257 aa).

Residues 128–222 enclose the Rhodanese domain; that stretch reads NGRRLVMLDA…YFEQVGGEGY (95 aa). C182 serves as the catalytic Cysteine persulfide intermediate.

The protein belongs to the TrhO family.

The catalysed reaction is uridine(34) in tRNA + AH2 + O2 = 5-hydroxyuridine(34) in tRNA + A + H2O. Functionally, catalyzes oxygen-dependent 5-hydroxyuridine (ho5U) modification at position 34 in tRNAs. The protein is tRNA uridine(34) hydroxylase of Xylella fastidiosa (strain M23).